A 1207-amino-acid polypeptide reads, in one-letter code: Systemin receptor SR160 (1207 aa).

The first 34 residues, 1-34 (MKAHKTVFNQHPLSLNKLFFVLLLIFFLPPASPA), serve as a signal peptide directing secretion. The Cys pair 1 signature appears at 71–78 (CSFTGVSC). LRR repeat units lie at residues 109-131 (NLES…AKSQ), 135-157 (TLDS…SSFG), 161-181 (NLKS…EMLK), 186-207 (SLQV…PWVS), 213-234 (ELEF…LDFK), 235-257 (NLSY…KDCS), 258-280 (NLQH…LSSC), 282-304 (KLSF…PSES), 305-325 (LQYL…QLAD), 329-350 (TVVE…SLGE), 353-375 (SLEL…TLLK), 378-401 (NIKT…SNLP), 402-423 (KLET…GICK), 428-450 (NLKV…LSNC), 452-474 (QLVS…LGSL), 476-499 (KLKD…MYLQ), 500-523 (ALEN…SNCT), 524-547 (KLNW…GRLS), 548-570 (NLAI…LGNC), and 572-594 (SLIW…LFKQ). A glycan (N-linked (GlcNAc...) asparagine) is linked at Asn-119. Residues Asn-166 and Asn-196 are each glycosylated (N-linked (GlcNAc...) asparagine). N-linked (GlcNAc...) asparagine glycosylation is found at Asn-235 and Asn-245. N-linked (GlcNAc...) asparagine glycosylation occurs at Asn-287. N-linked (GlcNAc...) asparagine glycans are attached at residues Asn-339 and Asn-363. N-linked (GlcNAc...) asparagine glycosylation is found at Asn-412 and Asn-449. The N-linked (GlcNAc...) asparagine glycan is linked to Asn-521. N-linked (GlcNAc...) asparagine glycosylation is found at Asn-556, Asn-584, Asn-646, and Asn-662. LRR repeat units follow at residues 664–686 (SMIF…LGAM), 688–711 (YLSI…GGLK), 712–735 (NVAI…TSLT), and 736–758 (LLGE…APFD). Asn-724, Asn-746, and Asn-767 each carry an N-linked (GlcNAc...) asparagine glycan. Residues 771–779 (CGYPLPLPC) carry the Cys pair 2 motif. Residues 803 to 823 (SVAMGLLFSLFCIFGLIIVAI) form a helical membrane-spanning segment. A Protein kinase domain is found at 888–1163 (FHNDSLVGSG…IQVMAMFKEI (276 aa)). ATP-binding positions include 894–902 (VGSGGFGDV) and Lys-916. Asp-1014 functions as the Proton acceptor in the catalytic mechanism.

The protein belongs to the protein kinase superfamily. Ser/Thr protein kinase family. In terms of processing, glycosylated.

Its subcellular location is the cell membrane. The enzyme catalyses L-seryl-[protein] + ATP = O-phospho-L-seryl-[protein] + ADP + H(+). It catalyses the reaction L-threonyl-[protein] + ATP = O-phospho-L-threonyl-[protein] + ADP + H(+). Receptor with a serine/threonine-protein kinase activity. Involved in the perception of systemin, a peptide hormone responsible for the systemic activation of defense genes in leaves of wounded plants. May also regulate, in response to brassinosteroid binding, a signaling cascade involved in plant development. In Solanum peruvianum (Peruvian tomato), this protein is Systemin receptor SR160.